The following is a 262-amino-acid chain: Acyl-[acyl-carrier-protein]--UDP-N-acetylglucosamine O-acyltransferase (262 aa).

This sequence belongs to the transferase hexapeptide repeat family. LpxA subfamily. As to quaternary structure, homotrimer.

The protein resides in the cytoplasm. It carries out the reaction a (3R)-hydroxyacyl-[ACP] + UDP-N-acetyl-alpha-D-glucosamine = a UDP-3-O-[(3R)-3-hydroxyacyl]-N-acetyl-alpha-D-glucosamine + holo-[ACP]. It functions in the pathway glycolipid biosynthesis; lipid IV(A) biosynthesis; lipid IV(A) from (3R)-3-hydroxytetradecanoyl-[acyl-carrier-protein] and UDP-N-acetyl-alpha-D-glucosamine: step 1/6. In terms of biological role, involved in the biosynthesis of lipid A, a phosphorylated glycolipid that anchors the lipopolysaccharide to the outer membrane of the cell. In Photorhabdus laumondii subsp. laumondii (strain DSM 15139 / CIP 105565 / TT01) (Photorhabdus luminescens subsp. laumondii), this protein is Acyl-[acyl-carrier-protein]--UDP-N-acetylglucosamine O-acyltransferase.